The sequence spans 563 residues: Lipase 1 (563 aa).

An N-terminal signal peptide occupies residues 1 to 19 (MVSKTFFLAAALNVVGTLA). Gln-20 is modified (pyrrolidone carboxylic acid). Cys-80 and Cys-124 are oxidised to a cystine. Residue Ser-236 is the Acyl-ester intermediate of the active site. A disulfide bridge connects residues Cys-295 and Cys-307. An N-linked (GlcNAc...) asparagine glycan is attached at Asn-302. The active-site Charge relay system is Glu-373. N-linked (GlcNAc...) asparagine glycosylation occurs at Asn-383. Residue His-482 is the Charge relay system of the active site.

The protein belongs to the type-B carboxylesterase/lipase family. Monomer.

Its subcellular location is the secreted. The catalysed reaction is a triacylglycerol + H2O = a diacylglycerol + a fatty acid + H(+). Functionally, hydrolyzes all ester bonds in triglyceride and displays a high affinity for triolein. For unsaturated substrates having long fatty acyl chains (C18:2 cis-9, cis-12 and C18:3 cis-9, cis-12, cis-15) GCL I shows higher specific activity than GCL II, whereas GCL II shows higher specific activity against saturated substrates having short fatty acid chains (C8, C10, C12 and C14). The sequence is that of Lipase 1 (LIP1) from Geotrichum candidum (Oospora lactis).